A 710-amino-acid polypeptide reads, in one-letter code: Integrator complex subunit 10 (710 aa).

Ser-231, Ser-381, and Ser-382 each carry phosphoserine. Residue Lys-464 forms a Glycyl lysine isopeptide (Lys-Gly) (interchain with G-Cter in SUMO2) linkage.

It belongs to the Integrator subunit 10 family. Component of the Integrator complex, composed of core subunits INTS1, INTS2, INTS3, INTS4, INTS5, INTS6, INTS7, INTS8, INTS9/RC74, INTS10, INTS11/CPSF3L, INTS12, INTS13, INTS14 and INTS15. The core complex associates with protein phosphatase 2A subunits PPP2CA and PPP2R1A, to form the Integrator-PP2A (INTAC) complex. INTS10 is part of the tail subcomplex, composed of INTS10, INTS13, INTS14 and INTS15.

It is found in the nucleus. Functionally, component of the integrator complex, a multiprotein complex that terminates RNA polymerase II (Pol II) transcription in the promoter-proximal region of genes. The integrator complex provides a quality checkpoint during transcription elongation by driving premature transcription termination of transcripts that are unfavorably configured for transcriptional elongation: the complex terminates transcription by (1) catalyzing dephosphorylation of the C-terminal domain (CTD) of Pol II subunit POLR2A/RPB1 and SUPT5H/SPT5, (2) degrading the exiting nascent RNA transcript via endonuclease activity and (3) promoting the release of Pol II from bound DNA. The integrator complex is also involved in terminating the synthesis of non-coding Pol II transcripts, such as enhancer RNAs (eRNAs), small nuclear RNAs (snRNAs), telomerase RNAs and long non-coding RNAs (lncRNAs). Within the integrator complex, INTS10 is part of the integrator tail module that acts as a platform for the recruitment of transcription factors at promoters. May be not involved in the recruitment of cytoplasmic dynein to the nuclear envelope, probably as component of the integrator complex. This chain is Integrator complex subunit 10 (Ints10), found in Mus musculus (Mouse).